Here is a 274-residue protein sequence, read N- to C-terminus: 2,3,4,5-tetrahydropyridine-2,6-dicarboxylate N-succinyltransferase (274 aa).

Positions 104 and 141 each coordinate substrate.

The protein belongs to the transferase hexapeptide repeat family. As to quaternary structure, homotrimer.

It is found in the cytoplasm. It carries out the reaction (S)-2,3,4,5-tetrahydrodipicolinate + succinyl-CoA + H2O = (S)-2-succinylamino-6-oxoheptanedioate + CoA. It participates in amino-acid biosynthesis; L-lysine biosynthesis via DAP pathway; LL-2,6-diaminopimelate from (S)-tetrahydrodipicolinate (succinylase route): step 1/3. This is 2,3,4,5-tetrahydropyridine-2,6-dicarboxylate N-succinyltransferase from Shewanella pealeana (strain ATCC 700345 / ANG-SQ1).